Consider the following 100-residue polypeptide: Nucleoid-associated protein RoseRS_1534 (100 aa).

Belongs to the YbaB/EbfC family. As to quaternary structure, homodimer.

It localises to the cytoplasm. The protein localises to the nucleoid. Its function is as follows. Binds to DNA and alters its conformation. May be involved in regulation of gene expression, nucleoid organization and DNA protection. This is Nucleoid-associated protein RoseRS_1534 from Roseiflexus sp. (strain RS-1).